Here is a 435-residue protein sequence, read N- to C-terminus: Phosphomethylpyrimidine synthase (435 aa).

Substrate contacts are provided by residues asparagine 67, methionine 96, tyrosine 125, histidine 163, 185–187 (SRG), 226–229 (DGLR), and glutamate 265. Histidine 269 contacts Zn(2+). Position 292 (tyrosine 292) interacts with substrate. Histidine 333 contacts Zn(2+). Positions 408, 411, and 415 each coordinate [4Fe-4S] cluster.

It belongs to the ThiC family. It depends on [4Fe-4S] cluster as a cofactor.

The enzyme catalyses 5-amino-1-(5-phospho-beta-D-ribosyl)imidazole + S-adenosyl-L-methionine = 4-amino-2-methyl-5-(phosphooxymethyl)pyrimidine + CO + 5'-deoxyadenosine + formate + L-methionine + 3 H(+). The protein operates within cofactor biosynthesis; thiamine diphosphate biosynthesis. Its function is as follows. Catalyzes the synthesis of the hydroxymethylpyrimidine phosphate (HMP-P) moiety of thiamine from aminoimidazole ribotide (AIR) in a radical S-adenosyl-L-methionine (SAM)-dependent reaction. This Thermus thermophilus (strain ATCC BAA-163 / DSM 7039 / HB27) protein is Phosphomethylpyrimidine synthase.